A 227-amino-acid polypeptide reads, in one-letter code: UPF0173 metal-dependent hydrolase BC_4613 (227 aa).

This sequence belongs to the UPF0173 family.

The polypeptide is UPF0173 metal-dependent hydrolase BC_4613 (Bacillus cereus (strain ATCC 14579 / DSM 31 / CCUG 7414 / JCM 2152 / NBRC 15305 / NCIMB 9373 / NCTC 2599 / NRRL B-3711)).